A 25-amino-acid chain; its full sequence is LPPCCTPPKKHCPAPACKYKPCCKS.

4-hydroxyproline is present on residues P2, P3, P7, P8, P13, P15, and P21. 3 disulfides stabilise this stretch: C4/C17, C5/C22, and C12/C23.

Belongs to the conotoxin M superfamily. As to expression, expressed by the venom duct.

It localises to the secreted. In terms of biological role, kappa-conotoxins inhibits voltage-gated potassium channels. This toxin dose-dependently and reversibly inhibits the Kv1.2/KCNA2 channel in mammalia. Does not exert protective effect on cardiac tissue when administered after an ischemic event. This Conus radiatus (Rayed cone) protein is Kappa-conotoxin RIIIJ.